Reading from the N-terminus, the 126-residue chain is Holo-[acyl-carrier-protein] synthase (126 aa).

The Mg(2+) site is built by D9 and E58.

Belongs to the P-Pant transferase superfamily. AcpS family. It depends on Mg(2+) as a cofactor.

The protein resides in the cytoplasm. The enzyme catalyses apo-[ACP] + CoA = holo-[ACP] + adenosine 3',5'-bisphosphate + H(+). Transfers the 4'-phosphopantetheine moiety from coenzyme A to a Ser of acyl-carrier-protein. In Vibrio vulnificus (strain YJ016), this protein is Holo-[acyl-carrier-protein] synthase.